A 466-amino-acid polypeptide reads, in one-letter code: Asparagine--tRNA ligase (466 aa).

The protein belongs to the class-II aminoacyl-tRNA synthetase family. Homodimer.

It localises to the cytoplasm. It catalyses the reaction tRNA(Asn) + L-asparagine + ATP = L-asparaginyl-tRNA(Asn) + AMP + diphosphate + H(+). In Buchnera aphidicola subsp. Acyrthosiphon pisum (strain APS) (Acyrthosiphon pisum symbiotic bacterium), this protein is Asparagine--tRNA ligase.